The following is a 378-amino-acid chain: Zinc finger protein DPF3 (378 aa).

K99 is covalently cross-linked (Glycyl lysine isopeptide (Lys-Gly) (interchain with G-Cter in SUMO2)). Residues 146–193 form a disordered region; that stretch reads LENDENVEEGNEEEDLEEDVPKRKNRTRGRARGSAGGRRRHDAASQED. A compositionally biased stretch (acidic residues) spans 148 to 163; it reads NDENVEEGNEEEDLEE. Positions 168 to 186 are enriched in basic residues; that stretch reads RKNRTRGRARGSAGGRRRH. The C2H2-type zinc finger occupies 198–221; it reads YVCDICGKRYKNRPGLSYHYAHTH. The tract at residues 225–254 is disordered; that stretch reads EEGDEAQDQETRSPPNHRNENHRPQKGPDG. PHD-type zinc fingers lie at residues 259-319 and 316-366; these read NNYC…CKSC and CKSC…CWEL. An interaction with HDGFL2 region spans residues 317–332; sequence KSCILCGTSENDDQLL. A Phosphoserine modification is found at G323.

This sequence belongs to the requiem/DPF family. As to quaternary structure, component of the BAF complex, which includes at least actin (ACTB), ARID1A, ARID1B/BAF250, SMARCA2, SMARCA4/BRG1/BAF190A, ACTL6A/BAF53, ACTL6B/BAF53B, SMARCE1/BAF57, SMARCC1/BAF155, SMARCC2/BAF170, SMARCB1/SNF5/INI1, and one or more of SMARCD1/BAF60A, SMARCD2/BAF60B, or SMARCD3/BAF60C. In muscle cells, the BAF complex also contains DPF3. Interacts with acetylated histones H3 and H4. Component of neuron-specific chromatin remodeling complex (nBAF complex) composed of at least, ARID1A/BAF250A or ARID1B/BAF250B, SMARCD1/BAF60A, SMARCD3/BAF60C, SMARCA2/BRM/BAF190B, SMARCA4/BRG1/BAF190A, SMARCB1/BAF47, SMARCC1/BAF155, SMARCE1/BAF57, SMARCC2/BAF170, DPF1/BAF45B, DPF3/BAF45C, ACTL6B/BAF53B and actin. Interacts with HDGFL2. Interacts with SMARCA4/BRG1/BAF190A, SMARCC1/BAF155 and SMARCD1/BAF60A. In terms of tissue distribution, expressed in the heart and somites. Expressed in cerebellum and spinal cord, but not in cerebral cortex. Expressed specifically in post-mitotic neurons (at protein level).

The protein resides in the nucleus. Its function is as follows. Muscle-specific component of the BAF complex, a multiprotein complex involved in transcriptional activation and repression of select genes by chromatin remodeling (alteration of DNA-nucleosome topology). Specifically binds acetylated lysines on histone 3 and 4 (H3K14ac, H3K9ac, H4K5ac, H4K8ac, H4K12ac, H4K16ac). In the complex, it acts as a tissue-specific anchor between histone acetylations and methylations and chromatin remodeling. It thereby probably plays an essential role in heart and skeletal muscle development. Belongs to the neuron-specific chromatin remodeling complex (nBAF complex). During neural development a switch from a stem/progenitor to a post-mitotic chromatin remodeling mechanism occurs as neurons exit the cell cycle and become committed to their adult state. The transition from proliferating neural stem/progenitor cells to post-mitotic neurons requires a switch in subunit composition of the npBAF and nBAF complexes. As neural progenitors exit mitosis and differentiate into neurons, npBAF complexes which contain ACTL6A/BAF53A and PHF10/BAF45A, are exchanged for homologous alternative ACTL6B/BAF53B and DPF1/BAF45B or DPF3/BAF45C subunits in neuron-specific complexes (nBAF). The npBAF complex is essential for the self-renewal/proliferative capacity of the multipotent neural stem cells. The nBAF complex along with CREST plays a role regulating the activity of genes essential for dendrite growth. Acts as a regulator of myogenesis in cooperation with HDGFL2. Mediates the interaction of HDGFL2 with the BAF complex. HDGFL2-DPF3a activate myogenic genes by increasing chromatin accessibility through recruitment of SMARCA4/BRG1/BAF190A (ATPase subunit of the BAF complex) to myogenic gene promoters. The sequence is that of Zinc finger protein DPF3 (Dpf3) from Mus musculus (Mouse).